Reading from the N-terminus, the 255-residue chain is 4-hydroxy-tetrahydrodipicolinate reductase (255 aa).

NAD(+) contacts are provided by residues 9–14 (GFKGKM), D35, 89–91 (GTT), and 115–118 (APNF). Residue H145 is the Proton donor/acceptor of the active site. H146 contacts (S)-2,3,4,5-tetrahydrodipicolinate. K149 (proton donor) is an active-site residue. 155–156 (GT) contacts (S)-2,3,4,5-tetrahydrodipicolinate.

The protein belongs to the DapB family.

The protein localises to the cytoplasm. It carries out the reaction (S)-2,3,4,5-tetrahydrodipicolinate + NAD(+) + H2O = (2S,4S)-4-hydroxy-2,3,4,5-tetrahydrodipicolinate + NADH + H(+). The catalysed reaction is (S)-2,3,4,5-tetrahydrodipicolinate + NADP(+) + H2O = (2S,4S)-4-hydroxy-2,3,4,5-tetrahydrodipicolinate + NADPH + H(+). The protein operates within amino-acid biosynthesis; L-lysine biosynthesis via DAP pathway; (S)-tetrahydrodipicolinate from L-aspartate: step 4/4. In terms of biological role, catalyzes the conversion of 4-hydroxy-tetrahydrodipicolinate (HTPA) to tetrahydrodipicolinate. The chain is 4-hydroxy-tetrahydrodipicolinate reductase from Streptococcus pneumoniae (strain 70585).